Here is a 221-residue protein sequence, read N- to C-terminus: Vesicle-associated membrane protein 714 (221 aa).

Position 2 is an N-acetylalanine (A2). Residues 2-190 are Cytoplasmic-facing; that stretch reads AIVYAVVARG…RRALWMKNAK (189 aa). One can recognise a Longin domain in the interval 7–112; sequence VVARGTVVLA…AMNDEFSRVL (106 aa). The v-SNARE coiled-coil homology domain occupies 127-187; the sequence is TLNRVRGEVS…KRLRRALWMK (61 aa). Residues 191–211 form a helical; Anchor for type IV membrane protein membrane-spanning segment; that stretch reads LLVLLTCLIVFLLYIIIASFC. Residues 212-221 are Vesicular-facing; the sequence is GGITLPSCRS.

Belongs to the synaptobrevin family. Highly expressed in leaves, stems and roots. Detected in flowers.

Its subcellular location is the golgi apparatus membrane. Its function is as follows. Involved in the targeting and/or fusion of transport vesicles to their target membrane. This is Vesicle-associated membrane protein 714 from Arabidopsis thaliana (Mouse-ear cress).